We begin with the raw amino-acid sequence, 291 residues long: 33 kDa chaperonin (291 aa).

2 disulfide bridges follow: cysteine 237–cysteine 239 and cysteine 270–cysteine 273.

It belongs to the HSP33 family. In terms of processing, under oxidizing conditions two disulfide bonds are formed involving the reactive cysteines. Under reducing conditions zinc is bound to the reactive cysteines and the protein is inactive.

It is found in the cytoplasm. Redox regulated molecular chaperone. Protects both thermally unfolding and oxidatively damaged proteins from irreversible aggregation. Plays an important role in the bacterial defense system toward oxidative stress. This chain is 33 kDa chaperonin, found in Bacillus cytotoxicus (strain DSM 22905 / CIP 110041 / 391-98 / NVH 391-98).